A 565-amino-acid polypeptide reads, in one-letter code: Proline--tRNA ligase (565 aa).

It belongs to the class-II aminoacyl-tRNA synthetase family. ProS type 1 subfamily. Homodimer.

It localises to the cytoplasm. The catalysed reaction is tRNA(Pro) + L-proline + ATP = L-prolyl-tRNA(Pro) + AMP + diphosphate. Its function is as follows. Catalyzes the attachment of proline to tRNA(Pro) in a two-step reaction: proline is first activated by ATP to form Pro-AMP and then transferred to the acceptor end of tRNA(Pro). As ProRS can inadvertently accommodate and process non-cognate amino acids such as alanine and cysteine, to avoid such errors it has two additional distinct editing activities against alanine. One activity is designated as 'pretransfer' editing and involves the tRNA(Pro)-independent hydrolysis of activated Ala-AMP. The other activity is designated 'posttransfer' editing and involves deacylation of mischarged Ala-tRNA(Pro). The misacylated Cys-tRNA(Pro) is not edited by ProRS. In Francisella philomiragia subsp. philomiragia (strain ATCC 25017 / CCUG 19701 / FSC 153 / O#319-036), this protein is Proline--tRNA ligase.